The sequence spans 965 residues: Phosphatidylethanolamine N-methyltransferase (965 aa).

At 1-82 (MDRGLSTGTN…SPSEPKNLSD (82 aa)) the chain is on the lumenal side. Positions 34-54 (PTVTNASNGKDKAGKTFGRTP) are disordered. Residues 83-103 (LVVLTILAGHIFLLWILPSGA) form a helical membrane-spanning segment. Residues 104–106 (KIP) lie on the Cytoplasmic side of the membrane. The helical transmembrane segment at 107-127 (VFAVIYLFWRSCYNAGIGWLL) threads the bilayer. Over 128–192 (HNQSHHKTLV…EYNTWLVFRR (65 aa)) the chain is Lumenal. Residues 193–213 (LVDLILMCDFASYCLFAIACS) traverse the membrane as a helical segment. The Cytoplasmic segment spans residues 214-220 (RHPANES). The chain crosses the membrane as a helical span at residues 221–241 (VLMTVIRWTSGIALVLFNLWV). Topologically, residues 242–274 (KLDAHRVVKDYAWYWGDFFYLIDQELTFDGVFE) are lumenal. Residues 275–295 (MAPHPMYSVGYAGYYGISLMA) traverse the membrane as a helical segment. The Cytoplasmic portion of the chain corresponds to 296–297 (AS). The chain crosses the membrane as a helical span at residues 298-318 (YKVLFISIIAHAAQFAFLVLV). The Lumenal segment spans residues 319–394 (ENPHIDKTYN…LDLHRITDTS (76 aa)). A disordered region spans residues 326 to 368 (TYNPPPPRKRTITEHDAASQRSQSPDTPNAPSVSEENVPNATT). The segment covering 344–368 (SQRSQSPDTPNAPSVSEENVPNATT) has biased composition (polar residues). Residues 395–415 (SILVQFLMFSLTVLTPSTPWY) form a helical membrane-spanning segment. Residue Q416 is a topological domain, cytoplasmic. Residues 417–437 (FLFVANAAIWRLWYSVGIGYL) traverse the membrane as a helical segment. At 438 to 470 (LNRQSNCKSWTRHFVKYGETPHEAWNQWKGTYH) the chain is on the lumenal side. A helical transmembrane segment spans residues 471-491 (LSMVMCYASFISAVWKMYTLP). The Cytoplasmic segment spans residues 492-503 (SNWGYGLAILRH). A helical membrane pass occupies residues 504–524 (VLGAGLISLQIWTSVSIYESL). Residues 525-559 (GEFGWFYGDFFFDESPKLTYNGIYRFLNNPERVLG) are Lumenal-facing. A helical transmembrane segment spans residues 560–580 (LAGVWGAVLITASGTVAFLAF). At 581-965 (LSHILSLGFI…GATTPTESKE (385 aa)) the chain is on the cytoplasmic side.

This sequence belongs to the class VI-like SAM-binding methyltransferase superfamily. CHO2 family.

The protein resides in the endoplasmic reticulum membrane. The catalysed reaction is a 1,2-diacyl-sn-glycero-3-phosphoethanolamine + S-adenosyl-L-methionine = a 1,2-diacyl-sn-glycero-3-phospho-N-methylethanolamine + S-adenosyl-L-homocysteine + H(+). The protein operates within phospholipid metabolism; phosphatidylcholine biosynthesis. In terms of biological role, catalyzes the first step of the methylation pathway of phosphatidylcholine biosynthesis, the SAM-dependent methylation of phosphatidylethanolamine (PE) to phosphatidylmonomethylethanolamine (PMME). This chain is Phosphatidylethanolamine N-methyltransferase, found in Emericella nidulans (strain FGSC A4 / ATCC 38163 / CBS 112.46 / NRRL 194 / M139) (Aspergillus nidulans).